Reading from the N-terminus, the 252-residue chain is Trans-aconitate 2-methyltransferase (252 aa).

Belongs to the methyltransferase superfamily. Tam family.

Its subcellular location is the cytoplasm. The catalysed reaction is trans-aconitate + S-adenosyl-L-methionine = (E)-3-(methoxycarbonyl)pent-2-enedioate + S-adenosyl-L-homocysteine. Its function is as follows. Catalyzes the S-adenosylmethionine monomethyl esterification of trans-aconitate. This is Trans-aconitate 2-methyltransferase from Escherichia coli O6:H1 (strain CFT073 / ATCC 700928 / UPEC).